We begin with the raw amino-acid sequence, 153 residues long: Fucose mutarotase (153 aa).

His24 (proton donor) is an active-site residue. Asp32 contacts substrate. Asp69 is an active-site residue. Residues Met78, Tyr119, Tyr137, and Asn139 each contribute to the substrate site. The active site involves Tyr119.

Belongs to the RbsD / FucU family.

It carries out the reaction alpha-L-fucose = beta-L-fucose. In terms of biological role, involved in the interconversion between alpha- and beta-L-fucoses. The chain is Fucose mutarotase (fuom) from Danio rerio (Zebrafish).